Here is a 156-residue protein sequence, read N- to C-terminus: RNA polymerase sigma factor SigS (156 aa).

The Polymerase core binding signature appears at 29-44 (EYYQLLLIKMWQLSQI). Positions 126–145 (QYEIADIMSLSTSTIKLIKA) form a DNA-binding region, H-T-H motif.

The protein belongs to the sigma-70 factor family.

Functionally, sigma factors are initiation factors that promote the attachment of RNA polymerase to specific initiation sites and are then released. Sigma-S contributes to the protection against external stress, thus playing a role in cellular fitness and survival. This is RNA polymerase sigma factor SigS (sigS) from Staphylococcus aureus (strain MRSA252).